The following is a 410-amino-acid chain: Peptidase T (410 aa).

His79 serves as a coordination point for Zn(2+). Asp81 is an active-site residue. Asp142 contributes to the Zn(2+) binding site. Residue Glu176 is the Proton acceptor of the active site. Residues Glu177, Asp199, and His381 each coordinate Zn(2+).

This sequence belongs to the peptidase M20B family. Requires Zn(2+) as cofactor.

It is found in the cytoplasm. The enzyme catalyses Release of the N-terminal residue from a tripeptide.. Its function is as follows. Cleaves the N-terminal amino acid of tripeptides. This is Peptidase T from Brevibacillus brevis (strain 47 / JCM 6285 / NBRC 100599).